A 104-amino-acid chain; its full sequence is Large ribosomal subunit protein uL23 (104 aa).

Belongs to the universal ribosomal protein uL23 family. Part of the 50S ribosomal subunit. Contacts protein L29, and trigger factor when it is bound to the ribosome.

One of the early assembly proteins it binds 23S rRNA. One of the proteins that surrounds the polypeptide exit tunnel on the outside of the ribosome. Forms the main docking site for trigger factor binding to the ribosome. The sequence is that of Large ribosomal subunit protein uL23 from Neisseria meningitidis serogroup B (strain ATCC BAA-335 / MC58).